The chain runs to 423 residues: Mannose-6-phosphate isomerase (423 aa).

Alanine 2 bears the N-acetylalanine mark. Phosphoserine is present on residues serine 102 and serine 108. Glutamine 110, histidine 112, glutamate 137, and histidine 276 together coordinate Zn(2+). Arginine 295 is a catalytic residue.

Belongs to the mannose-6-phosphate isomerase type 1 family. Zn(2+) serves as cofactor. As to expression, expressed in all tissues, but more abundant in testis.

It localises to the cytoplasm. The catalysed reaction is D-mannose 6-phosphate = D-fructose 6-phosphate. It participates in nucleotide-sugar biosynthesis; GDP-alpha-D-mannose biosynthesis; alpha-D-mannose 1-phosphate from D-fructose 6-phosphate: step 1/2. Functionally, isomerase that catalyzes the interconversion of fructose-6-P and mannose-6-P and has a critical role in the supply of D-mannose derivatives required for many eukaryotic glycosylation reactions. This Mus musculus (Mouse) protein is Mannose-6-phosphate isomerase.